A 662-amino-acid chain; its full sequence is MPHEMEENGAEVSDVMSENEDDTETFLKDDEKMTEQSTTDSTTEVKKKYDPKDPLRPRRKKARRACFACQRAHLTCGDERPCQRCIKRGLADACQDGVRKKAKYLHDAPPEALRPVLGPNYNPTPTPSRTNGHRHSSSQSDNLSATGSNFFSQGSTASLPVYSAGAQTPVAIDGLPSFNPQTSPTSFQGPINNAAHTPMNNMMPAGNMDFNALFDPSNPALYNFDLEGLNFGSQYAGWEFGILNKMALGAETPPRENSMSQTPTTEANYAALFGNANNGFDHPMLGADFSGMDQNNQSLYAQGNLQHGLPHAYAIAAGPTSLASPSTDTTASPHSVAGMDGSPNHNFAGIPTVPAATRPRPKHNKAGPKSILGKRQRDSAAIYESVKEPYPYTTGFHNMVAVLRNRLPGNKLLRIAKALGEIRPSFISCTKDLTRQDLVFMEKCFQRTLVEYDDFLQHCCAPTIVCRRSGEVAAVNKEFTALTGWTKDVLLGKEPNLNVNVYSGRSTNGTNTPDHNSQGEMTTPRPQRAMLDLSGGRPQPVFLGELLDDDSVVEFYQDFSQLAFEDSRGKVQRSCRLNKYRAPQDPDQKEPGSQKDAQPGILSSRVTRIDGSHGISRIEKDGKVECTYCWTIKRDVFDIPMMIIINFLPRYLPDQGPQQLAV.

The interval 1-61 (MPHEMEENGA…KDPLRPRRKK (61 aa)) is disordered. Basic and acidic residues-rich tracts occupy residues 25 to 34 (TFLKDDEKMT) and 43 to 56 (TEVKKKYDPKDPLR). The segment at residues 66-94 (CFACQRAHLTCGDERPCQRCIKRGLADAC) is a DNA-binding region (zn(2)-C6 fungal-type). 3 disordered regions span residues 105 to 149 (LHDA…TGSN), 502 to 524 (YSGRSTNGTNTPDHNSQGEMTTP), and 580 to 606 (YRAPQDPDQKEPGSQKDAQPGILSSRV). Polar residues-rich tracts occupy residues 121-130 (YNPTPTPSRT) and 137-149 (SSQSDNLSATGSN). Positions 448–519 (TLVEYDDFLQ…TNTPDHNSQG (72 aa)) constitute a PAS domain. The segment covering 582 to 593 (APQDPDQKEPGS) has biased composition (basic and acidic residues).

The protein belongs to the ERT1/acuK family.

It localises to the nucleus. Transcription factor which regulates nonfermentable carbon utilization. Activator of gluconeogenetic genes. The protein is Transcription activator of gluconeogenesis NECHADRAFT_59099 of Fusarium vanettenii (strain ATCC MYA-4622 / CBS 123669 / FGSC 9596 / NRRL 45880 / 77-13-4) (Fusarium solani subsp. pisi).